We begin with the raw amino-acid sequence, 1375 residues long: DNA-directed RNA polymerase subunit beta (1375 aa).

Belongs to the RNA polymerase beta chain family. In terms of assembly, the RNAP catalytic core consists of 2 alpha, 1 beta, 1 beta' and 1 omega subunit. When a sigma factor is associated with the core the holoenzyme is formed, which can initiate transcription.

The catalysed reaction is RNA(n) + a ribonucleoside 5'-triphosphate = RNA(n+1) + diphosphate. In terms of biological role, DNA-dependent RNA polymerase catalyzes the transcription of DNA into RNA using the four ribonucleoside triphosphates as substrates. In Campylobacter jejuni subsp. jejuni serotype O:6 (strain 81116 / NCTC 11828), this protein is DNA-directed RNA polymerase subunit beta.